The sequence spans 367 residues: Chorismate synthase (367 aa).

2 residues coordinate NADP(+): Arg-48 and Arg-54. Residues 125-127 (RSS), 238-239 (NA), Gly-278, 293-297 (KPTSS), and Arg-319 contribute to the FMN site.

The protein belongs to the chorismate synthase family. In terms of assembly, homotetramer. FMNH2 is required as a cofactor.

It carries out the reaction 5-O-(1-carboxyvinyl)-3-phosphoshikimate = chorismate + phosphate. The protein operates within metabolic intermediate biosynthesis; chorismate biosynthesis; chorismate from D-erythrose 4-phosphate and phosphoenolpyruvate: step 7/7. Its function is as follows. Catalyzes the anti-1,4-elimination of the C-3 phosphate and the C-6 proR hydrogen from 5-enolpyruvylshikimate-3-phosphate (EPSP) to yield chorismate, which is the branch point compound that serves as the starting substrate for the three terminal pathways of aromatic amino acid biosynthesis. This reaction introduces a second double bond into the aromatic ring system. This chain is Chorismate synthase, found in Stenotrophomonas maltophilia (strain K279a).